Reading from the N-terminus, the 197-residue chain is RNA pyrophosphohydrolase (197 aa).

The Nudix hydrolase domain occupies 6-154 (GYRPNVGIVL…KREVYQLALS (149 aa)). The Nudix box signature appears at 38-59 (GGIQHGESPEQAMYRELHEEVG).

It belongs to the Nudix hydrolase family. RppH subfamily. A divalent metal cation serves as cofactor.

Functionally, accelerates the degradation of transcripts by removing pyrophosphate from the 5'-end of triphosphorylated RNA, leading to a more labile monophosphorylated state that can stimulate subsequent ribonuclease cleavage. In Polynucleobacter necessarius subsp. necessarius (strain STIR1), this protein is RNA pyrophosphohydrolase.